We begin with the raw amino-acid sequence, 381 residues long: GDSL esterase/lipase At3g48460 (381 aa).

Positions 1 to 26 (MSSSISPLLTTAISVAILLFSTISTA) are cleaved as a signal peptide. Ser-45 serves as the catalytic Nucleophile. N-linked (GlcNAc...) asparagine glycosylation is found at Asn-112, Asn-140, and Asn-258. Catalysis depends on residues Asp-344 and His-347.

This sequence belongs to the 'GDSL' lipolytic enzyme family.

It localises to the secreted. The protein is GDSL esterase/lipase At3g48460 of Arabidopsis thaliana (Mouse-ear cress).